The primary structure comprises 377 residues: Diels-Alderase fsa2 (377 aa).

Belongs to the Diels-Alderase family.

The enzyme catalyses (5S)-3-[(2E,6R,8E,10E,12E)-2,6-dimethyltetradeca-2,8,10,12-tetraenoyl]-5-(hydroxymethyl)pyrrolidine-2,4-dione = trichosetin. The protein operates within mycotoxin biosynthesis. Diels-Alderase; part of the gene cluster that mediates the biosynthesis of equisetin, a trans-fused decalin-containing tetramic acid with antimicrobial activity. The PKS module of eqxS together with the enoylreductase eqxC catalyze the formation of the polyketide unit which is then conjugated to L-serine by the condensation domain of the eqxS NRPS module. Activity of the Dieckmann cyclase domain (RED) results in release of the Dieckmann product intermediate. Diels-Alderase eqx3 is involved in endo-selective Diels-Alder cycloaddition to form the decalin ring, leading to the production of N-desmethylequisetin also called trichosetin. Subsequent N-methylation is carried out by eqxD to give equisetin. This is Diels-Alderase fsa2 from Fusarium heterosporum.